We begin with the raw amino-acid sequence, 197 residues long: Adenylate kinase (197 aa).

12–17 serves as a coordination point for ATP; that stretch reads GSGKTT. The segment at 34 to 63 is NMP; sequence STGDMLREEVASGSELGKTIESYIAKGALV. AMP contacts are provided by residues T35, R40, 61 to 63, 88 to 91, and Q95; these read ALV and GYPR. Residues 130-144 are LID; sequence GRRAEAAPGEERSDD. Position 131 (R131) interacts with ATP. Residues R141 and R152 each contribute to the AMP site. R180 is an ATP binding site.

The protein belongs to the adenylate kinase family. As to quaternary structure, monomer.

Its subcellular location is the cytoplasm. The catalysed reaction is AMP + ATP = 2 ADP. It functions in the pathway purine metabolism; AMP biosynthesis via salvage pathway; AMP from ADP: step 1/1. In terms of biological role, catalyzes the reversible transfer of the terminal phosphate group between ATP and AMP. Plays an important role in cellular energy homeostasis and in adenine nucleotide metabolism. The polypeptide is Adenylate kinase (Sulfurovum sp. (strain NBC37-1)).